We begin with the raw amino-acid sequence, 73 residues long: U-scoloptoxin(15)-Sa1a (73 aa).

A signal peptide spans 1-20 (MKFHIIFCLLAALMMTSAFA).

The protein belongs to the scoloptoxin-15 family. Post-translationally, contains 2 disulfide bonds. As to expression, expressed by the venom gland.

It is found in the secreted. The protein is U-scoloptoxin(15)-Sa1a of Scolopendra alternans (Florida Keys giant centipede).